Here is a 363-residue protein sequence, read N- to C-terminus: Putative C-&gt;U-editing enzyme APOBEC-4 (363 aa).

Residues 61 to 177 (PQTKHLTFYE…AWNREALRSL (117 aa)) form the CMP/dCMP-type deaminase domain. Position 93 (His-93) interacts with Zn(2+). Catalysis depends on Glu-95, which acts as the Proton donor. Positions 127 and 134 each coordinate Zn(2+).

The protein belongs to the cytidine and deoxycytidylate deaminase family. Zn(2+) is required as a cofactor.

Its function is as follows. Putative C to U editing enzyme whose physiological substrate is not yet known. This Macaca fascicularis (Crab-eating macaque) protein is Putative C-&gt;U-editing enzyme APOBEC-4 (APOBEC4).